The following is a 292-amino-acid chain: 4-hydroxy-tetrahydrodipicolinate synthase (292 aa).

Thr-44 is a pyruvate binding site. Residue Tyr-132 is the Proton donor/acceptor of the active site. Catalysis depends on Lys-160, which acts as the Schiff-base intermediate with substrate. Ile-202 serves as a coordination point for pyruvate.

The protein belongs to the DapA family. In terms of assembly, homotetramer; dimer of dimers.

Its subcellular location is the cytoplasm. It catalyses the reaction L-aspartate 4-semialdehyde + pyruvate = (2S,4S)-4-hydroxy-2,3,4,5-tetrahydrodipicolinate + H2O + H(+). It functions in the pathway amino-acid biosynthesis; L-lysine biosynthesis via DAP pathway; (S)-tetrahydrodipicolinate from L-aspartate: step 3/4. Its function is as follows. Catalyzes the condensation of (S)-aspartate-beta-semialdehyde [(S)-ASA] and pyruvate to 4-hydroxy-tetrahydrodipicolinate (HTPA). In Magnetococcus marinus (strain ATCC BAA-1437 / JCM 17883 / MC-1), this protein is 4-hydroxy-tetrahydrodipicolinate synthase.